The chain runs to 86 residues: Large ribosomal subunit protein bL27 (86 aa).

The span at 1 to 10 (MAQKKGGGST) shows a compositional bias: gly residues. The disordered stretch occupies residues 1 to 20 (MAQKKGGGSTRNGRDSESKR).

This sequence belongs to the bacterial ribosomal protein bL27 family.

The sequence is that of Large ribosomal subunit protein bL27 from Bordetella avium (strain 197N).